The chain runs to 154 residues: 17 kDa surface antigen (154 aa).

The first 19 residues, 1-19 (MKLLSKIMIIALAASMLQA), serve as a signal peptide directing secretion. A lipid anchor (N-palmitoyl cysteine) is attached at C20. C20 carries S-diacylglycerol cysteine lipidation.

Belongs to the rickettsiale 17 kDa surface antigen family.

It localises to the cell outer membrane. The polypeptide is 17 kDa surface antigen (omp) (Rickettsia montanensis).